Here is a 314-residue protein sequence, read N- to C-terminus: Olfactory receptor 14K1 (314 aa).

The Extracellular portion of the chain corresponds to 1 to 23 (MTNQTQMMEFLLVRFTENWVLLR). N-linked (GlcNAc...) asparagine glycosylation is present at Asn-3. The helical transmembrane segment at 24 to 44 (LHALLFSLIYLTAVLMNLVII) threads the bilayer. Residues 45–52 (LLMILDHR) lie on the Cytoplasmic side of the membrane. Residues 53-73 (LHMAMYFFLRHLSFLDLCLIS) traverse the membrane as a helical segment. The Extracellular segment spans residues 74–97 (ATVPKSILNSVASTDSISFLGCVL). Cysteines 95 and 187 form a disulfide. A helical transmembrane segment spans residues 98-118 (QLFLVVLLAGSEIGILTAMSY). The Cytoplasmic segment spans residues 119–131 (DRYAAICCPLHCE). Residues 132–152 (AVMSRGLCVQLMALSWLNRGA) form a helical membrane-spanning segment. Residues 153 to 194 (LGLLYTAGTFSLNFYGSDELHQFFCDVPALLKLTCSKEHAII) lie on the Extracellular side of the membrane. The helical transmembrane segment at 195-215 (SVSVAIGVCYAFSCLVCIVVS) threads the bilayer. The Cytoplasmic portion of the chain corresponds to 216 to 235 (YVYIFSAVLRISQRQRQSKA). The helical transmembrane segment at 236–256 (FSNCVPHLIVVTVFLVTGAVA) threads the bilayer. At 257 to 269 (YLKPGSDAPSILD) the chain is on the extracellular side. The helical transmembrane segment at 270–290 (LLVSVFYSVAPPTLNPVIYCL) threads the bilayer. Topologically, residues 291–314 (KNKDIKSALSKVLWNVRSSGVMKR) are cytoplasmic.

Belongs to the G-protein coupled receptor 1 family.

It localises to the cell membrane. Odorant receptor. This Homo sapiens (Human) protein is Olfactory receptor 14K1 (OR14K1).